A 261-amino-acid polypeptide reads, in one-letter code: Imidazole glycerol phosphate synthase subunit HisF (261 aa).

Active-site residues include aspartate 16 and aspartate 135.

This sequence belongs to the HisA/HisF family. In terms of assembly, heterodimer of HisH and HisF.

It localises to the cytoplasm. It carries out the reaction 5-[(5-phospho-1-deoxy-D-ribulos-1-ylimino)methylamino]-1-(5-phospho-beta-D-ribosyl)imidazole-4-carboxamide + L-glutamine = D-erythro-1-(imidazol-4-yl)glycerol 3-phosphate + 5-amino-1-(5-phospho-beta-D-ribosyl)imidazole-4-carboxamide + L-glutamate + H(+). The protein operates within amino-acid biosynthesis; L-histidine biosynthesis; L-histidine from 5-phospho-alpha-D-ribose 1-diphosphate: step 5/9. Functionally, IGPS catalyzes the conversion of PRFAR and glutamine to IGP, AICAR and glutamate. The HisF subunit catalyzes the cyclization activity that produces IGP and AICAR from PRFAR using the ammonia provided by the HisH subunit. The sequence is that of Imidazole glycerol phosphate synthase subunit HisF from Mycolicibacterium vanbaalenii (strain DSM 7251 / JCM 13017 / BCRC 16820 / KCTC 9966 / NRRL B-24157 / PYR-1) (Mycobacterium vanbaalenii).